A 100-amino-acid chain; its full sequence is Urease subunit gamma (100 aa).

Belongs to the urease gamma subunit family. As to quaternary structure, heterotrimer of UreA (gamma), UreB (beta) and UreC (alpha) subunits. Three heterotrimers associate to form the active enzyme.

The protein localises to the cytoplasm. The enzyme catalyses urea + 2 H2O + H(+) = hydrogencarbonate + 2 NH4(+). Its pathway is nitrogen metabolism; urea degradation; CO(2) and NH(3) from urea (urease route): step 1/1. The polypeptide is Urease subunit gamma (Paraburkholderia xenovorans (strain LB400)).